The sequence spans 1544 residues: Lysophospholipase NTE1 (1544 aa).

Residues 1–37 (MSTIEIVSTVAEYTEIHSPVSSKFLLPSARDSSSSIS) lie on the Cytoplasmic side of the membrane. The helical transmembrane segment at 38–58 (LFSAIFWFWSWLFFKIMNIFL) threads the bilayer. Over 59–76 (YYIPNIIVNLFSVNFQIT) the chain is Lumenal. The chain crosses the membrane as a helical span at residues 77–97 (LSLSSIVITLTGIISFCFLIV). The Cytoplasmic portion of the chain corresponds to 98-1544 (RYKYLTRYSK…RKSLYRRSSI (1447 aa)). Disordered stretches follow at residues 265 to 312 (RLFS…RNYP) and 424 to 552 (ESPS…EETE). Residues 275–310 (NPASNPLSPDNTGSKSFDPLSSGNFNDTSLSSSDRN) show a composition bias toward polar residues. Positions 425–447 (SPSVSINKTSSSSSSLPKKSTTS) are enriched in low complexity. Composition is skewed to polar residues over residues 448–458 (LRPLNRNQSSR) and 517–536 (QISS…TTKF). The segment covering 537–546 (ENIRDRTFSD) has biased composition (basic and acidic residues). A nucleoside 3',5'-cyclic phosphate-binding positions include 681 to 811 (SFES…LKSL) and 807 to 960 (KLKS…VANK). The PNPLA domain maps to 1237 to 1401 (LVLGGGGSRG…LDNLPVMEMK (165 aa)). Positions 1241-1246 (GGGSRG) match the GXGXXG motif. A GXSXG motif is present at residues 1268–1272 (GTSIG). Ser-1270 (nucleophile) is an active-site residue. The Proton acceptor role is filled by Asp-1388. A DGA/G motif is present at residues 1388–1390 (DGG).

The protein belongs to the NTE family.

It localises to the endoplasmic reticulum membrane. It carries out the reaction a 1-acyl-sn-glycero-3-phosphocholine + H2O = sn-glycerol 3-phosphocholine + a fatty acid + H(+). With respect to regulation, inhibited by organophosphorus esters. Functionally, intracellular phospholipase B that catalyzes the double deacylation of phosphatidylcholine (PC) to glycerophosphocholine (GroPCho). Plays an important role in membrane lipid homeostasis. Responsible for the rapid PC turnover in response to inositol, elevated temperatures, or when choline is present in the growth medium. This Debaryomyces hansenii (strain ATCC 36239 / CBS 767 / BCRC 21394 / JCM 1990 / NBRC 0083 / IGC 2968) (Yeast) protein is Lysophospholipase NTE1 (NTE1).